Reading from the N-terminus, the 415-residue chain is D-galactonate dehydratase family member RspA (415 aa).

Substrate-binding residues include Asn48 and His133. Residue Tyr170 is the Proton donor/acceptor of the active site. Asp223 is a binding site for Mg(2+). The active-site Proton donor/acceptor is the His225. 3 residues coordinate Mg(2+): Glu249, Asp250, and Glu275. Residues Glu275, Arg296, His325, Asp329, and Glu352 each contribute to the substrate site.

The protein belongs to the mandelate racemase/muconate lactonizing enzyme family. GalD subfamily. Requires Mg(2+) as cofactor.

It catalyses the reaction D-mannonate = 2-dehydro-3-deoxy-D-gluconate + H2O. In terms of biological role, has low D-mannonate dehydratase activity (in vitro), suggesting that this is not a physiological substrate and that it has no significant role in D-mannonate degradation in vivo. Has no detectable activity with a panel of 70 other acid sugars (in vitro). The sequence is that of D-galactonate dehydratase family member RspA (rspA) from Escherichia coli O6:H1 (strain CFT073 / ATCC 700928 / UPEC).